Here is a 147-residue protein sequence, read N- to C-terminus: Large ribosomal subunit protein bL9 (147 aa).

Belongs to the bacterial ribosomal protein bL9 family.

Its function is as follows. Binds to the 23S rRNA. The chain is Large ribosomal subunit protein bL9 from Clostridium acetobutylicum (strain ATCC 824 / DSM 792 / JCM 1419 / IAM 19013 / LMG 5710 / NBRC 13948 / NRRL B-527 / VKM B-1787 / 2291 / W).